The chain runs to 84 residues: Beta-defensin 119 (84 aa).

A signal peptide spans 1–21; sequence MKLLYLFLAILLVIEEPVISG. 3 disulfides stabilise this stretch: C28/C55, C35/C49, and C39/C56.

Belongs to the beta-defensin family.

It is found in the secreted. Its function is as follows. Has antibacterial activity. The polypeptide is Beta-defensin 119 (DEFB119) (Pongo pygmaeus (Bornean orangutan)).